Reading from the N-terminus, the 207-residue chain is Small ribosomal subunit protein uS4 (207 aa).

The segment covering 29–38 (SDKAKFDSKP) has biased composition (basic and acidic residues). Positions 29 to 54 (SDKAKFDSKPGQHGRTSGTRTSDYGL) are disordered. A compositionally biased stretch (polar residues) spans 42–52 (GRTSGTRTSDY). An S4 RNA-binding domain is found at 97–160 (SRLDNVVYRM…KKQTRIAEAL (64 aa)).

This sequence belongs to the universal ribosomal protein uS4 family. As to quaternary structure, part of the 30S ribosomal subunit. Contacts protein S5. The interaction surface between S4 and S5 is involved in control of translational fidelity.

Its function is as follows. One of the primary rRNA binding proteins, it binds directly to 16S rRNA where it nucleates assembly of the body of the 30S subunit. With S5 and S12 plays an important role in translational accuracy. The polypeptide is Small ribosomal subunit protein uS4 (Polaromonas naphthalenivorans (strain CJ2)).